A 130-amino-acid polypeptide reads, in one-letter code: Small ribosomal subunit protein uS17m (130 aa).

The N-terminal 20 residues, 1 to 20 (MSVVRSSVHARWIVGKVIGT), are a transit peptide targeting the mitochondrion.

It belongs to the universal ribosomal protein uS17 family. In terms of assembly, component of the mitochondrial small ribosomal subunit (mt-SSU). Mature mammalian 55S mitochondrial ribosomes consist of a small (28S) and a large (39S) subunit. The 28S small subunit contains a 12S ribosomal RNA (12S mt-rRNA) and 30 different proteins. The 39S large subunit contains a 16S rRNA (16S mt-rRNA), a copy of mitochondrial valine transfer RNA (mt-tRNA(Val)), which plays an integral structural role, and 52 different proteins.

It is found in the mitochondrion. In Homo sapiens (Human), this protein is Small ribosomal subunit protein uS17m (MRPS17).